A 146-amino-acid chain; its full sequence is Allograft inflammatory factor 1 (146 aa).

Serine 1 bears the N-acetylserine mark. Lysine 10 carries the N6-acetyllysine modification. A Phosphoserine modification is found at serine 38. One can recognise an EF-hand 1 domain in the interval 44–79 (RKLEAFKQKYMEFDLNGNGDIDIMSLKRMLEKLGVP). Aspartate 57, asparagine 59, asparagine 61, aspartate 63, and threonine 99 together coordinate Ca(2+). The EF-hand 2; degenerate domain maps to 81–115 (THLELKKLIKEVSSGSGETFSYSIFLKMMLGKRSA). The tract at residues 127–146 (AREQEKPTGPPAKKAISELP) is disordered.

As to quaternary structure, homodimer (Potential). Monomer. Interacts with LCP1. Microglial cells in the central nervous system and dendritic cells and macrophages in several organs.

It is found in the cytoplasm. Its subcellular location is the cytoskeleton. It localises to the cell projection. The protein localises to the ruffle membrane. The protein resides in the phagocytic cup. Functionally, actin-binding protein that enhances membrane ruffling and RAC activation. Enhances the actin-bundling activity of LCP1. Binds calcium. Plays a role in RAC signaling and in phagocytosis. May play a role in macrophage activation and function. Promotes the proliferation of vascular smooth muscle cells and of T-lymphocytes. Enhances lymphocyte migration. Plays a role in vascular inflammation. Has a dual influence on glucose-induced insulin secretion: inhibition at low concentration and stimulation at high concentrations. The sequence is that of Allograft inflammatory factor 1 (AIF1) from Sus scrofa (Pig).